The primary structure comprises 191 residues: MSLVDQILGDGAVADLCLWKDKINSGITLVMATLFWFLLEFMEARLVPLLCSILLLLMLILFLWAKFGEVFFTRRPPTPEELNQPDSPLKALFSMMEGHLLMLYEIAYGKDNKTFLKTILYVAIIYNIGSYISLLTILYICLVCSMTIPVVYMQFQELIDSFMGKVSEEKNNLLEVFKQVVSKIPRAPKVE.

One can recognise a Reticulon domain in the interval 13 to 191 (VADLCLWKDK…SKIPRAPKVE (179 aa)). 3 helical membrane-spanning segments follow: residues 23 to 43 (INSGITLVMATLFWFLLEFME), 47 to 67 (VPLLCSILLLLMLILFLWAKF), and 122 to 142 (VAIIYNIGSYISLLTILYICL).

It is found in the endoplasmic reticulum membrane. The chain is Reticulon-like protein B15 (RTNLB15) from Arabidopsis thaliana (Mouse-ear cress).